Consider the following 322-residue polypeptide: Ubiquitin-conjugating enzyme E2 U (322 aa).

The region spanning Arg4–Met153 is the UBC core domain. Residue Cys89 is the Glycyl thioester intermediate of the active site.

It belongs to the ubiquitin-conjugating enzyme family. In terms of processing, autoubiquitinated in vitro in the presence of UBR5.

It catalyses the reaction S-ubiquitinyl-[E1 ubiquitin-activating enzyme]-L-cysteine + [E2 ubiquitin-conjugating enzyme]-L-cysteine = [E1 ubiquitin-activating enzyme]-L-cysteine + S-ubiquitinyl-[E2 ubiquitin-conjugating enzyme]-L-cysteine.. It participates in protein modification; protein ubiquitination. Functionally, catalyzes the covalent attachment of ubiquitin to other proteins. The protein is Ubiquitin-conjugating enzyme E2 U (UBE2U) of Macaca fascicularis (Crab-eating macaque).